The sequence spans 1167 residues: MFARGQKIDRRYYGKDVPNFMELPNLIDIQIQSYNKFLNKEKKTDETEIEGLESVFHTTFPIESTNEDMALQYLSYSLDYDSIKFSEIECKQKGLTYSVPLKAEIDLFFKETKEIRRKNIYMGDIPLMTERGTFIINGAERVVVSQIHRSPGVIFSHEKGVYSSRIIPYRGTWLEFEIDQKKELIYAKLDSKKRILGTIFLRALGYDTREKIIDLFYKTKTAKISPDRTEYEELIGQVLARDVYVKGEDGEKRKMHQAGEKIHPHNIDDLIQNDVKKITIIDFKGKDSLDSQIIINCFEREEIKYTPDPAVNDEPTVEDALNAVYSVIRPGDPITYENAKEDLHNMFFTARRYDIGKVGRYKLNKKFDYSDDVKGTTLIEEDIFKTMKFLIKVYIGEESIDDIDHLGNRRIRSVGEIMTDVLKKAFSRMERIARDRMSSKEMDTIKPKDLISIKPIVAAIKEFFGASQLSQFMDQVNPLAELTHKRRLNALGPGGLSRDRAGFEVREVHYTHYGRMCPIETPEGPNIGLIVSMANYARVNEYGFLEAPYVKVVNGVATREIEYLSAMDEDKYFIGQVSSAIGKDGKINTDQVSCRKLGDYTSISPKDIQYMDVSPKQIISVSASLIPFLEHDDANRALMGSNMQRQAVPLVFPEPPRVGTGMEKKCAYDSGVLVKAKRSGKVEFVSSDTIIIAPEKGKNKEDKDEYTLLKYQRTNQETCYHQRPIVNVGDTVKAGQPIADGPATYNGELALGRNILVGFVPWNGYNYEDAILISRRVVKEDMFTSIHIKELSTDVRETKLGAEKMTCDIPNKSEKSLDDLDSEGIIRIGSKVKPGDILVGKVTPKSESDTTPEFKLLNSIFGEKAKEVRDTSLRVPHGTEGTVIDVQRLKRDQGDDLSPGVDEVVKVLIATKRKLREGDKMAGRHGNKGLVARILPEEDMPYMEDGTPLDICLNPLGVPSRMNIGQILESELGLAGLKLNEWYESPVFESPSMEQIEAKLKEAGYPTSSKVKLRDGLTGRLFENEVFVGVIYFLKLAHLVDDKMHARSTGPYSLVTQQPLGGKAQFGGQRLGEMEVWALEAYGAANTLQELITIKSDDMHGRSKIYESIVKGEPSSSAGIPESFNVLVQELRGLALDFTIYDAKGQQIPLTERDEELIKREKTSTNF.

Belongs to the RNA polymerase beta chain family. In terms of assembly, the RNAP catalytic core consists of 2 alpha, 1 beta, 1 beta' and 1 omega subunit. When a sigma factor is associated with the core the holoenzyme is formed, which can initiate transcription.

It carries out the reaction RNA(n) + a ribonucleoside 5'-triphosphate = RNA(n+1) + diphosphate. Functionally, DNA-dependent RNA polymerase catalyzes the transcription of DNA into RNA using the four ribonucleoside triphosphates as substrates. The polypeptide is DNA-directed RNA polymerase subunit beta (Treponema denticola (strain ATCC 35405 / DSM 14222 / CIP 103919 / JCM 8153 / KCTC 15104)).